Consider the following 185-residue polypeptide: Ribosome-recycling factor (185 aa).

Belongs to the RRF family.

The protein localises to the cytoplasm. Its function is as follows. Responsible for the release of ribosomes from messenger RNA at the termination of protein biosynthesis. May increase the efficiency of translation by recycling ribosomes from one round of translation to another. This chain is Ribosome-recycling factor, found in Mycobacterium leprae (strain Br4923).